A 193-amino-acid polypeptide reads, in one-letter code: MARNANVTRETKETKIEVFLDIDRKGEIKVSTPVPFFNHMLITLLTYMNSTATVSATDKLPYDDHHIIEDVAITLGLAIKEALGDKRGIKRFSHQIIPMDEALVLVSLDISNRGMAFVNLNLKRSEIGGLATENIPHFFQSFAYNSGVTLHISQLSGYNTHHIIEASFKALGLALYEATRIVDNEIRSTKGVI.

Belongs to the imidazoleglycerol-phosphate dehydratase family.

The protein resides in the cytoplasm. It catalyses the reaction D-erythro-1-(imidazol-4-yl)glycerol 3-phosphate = 3-(imidazol-4-yl)-2-oxopropyl phosphate + H2O. It participates in amino-acid biosynthesis; L-histidine biosynthesis; L-histidine from 5-phospho-alpha-D-ribose 1-diphosphate: step 6/9. This Saccharolobus islandicus (strain M.16.27) (Sulfolobus islandicus) protein is Imidazoleglycerol-phosphate dehydratase.